A 301-amino-acid polypeptide reads, in one-letter code: Protease HtpX homolog (301 aa).

2 helical membrane passes run 11–31 (VLLL…IAGA) and 34–54 (NSAF…YSYW). His-138 lines the Zn(2+) pocket. Glu-139 is an active-site residue. His-142 provides a ligand contact to Zn(2+). 2 helical membrane-spanning segments follow: residues 154–174 (AAAV…AAIF) and 188–208 (LVGL…QLAI). Glu-213 lines the Zn(2+) pocket.

The protein belongs to the peptidase M48B family. Requires Zn(2+) as cofactor.

It is found in the cell membrane. The protein is Protease HtpX homolog of Kocuria rhizophila (strain ATCC 9341 / DSM 348 / NBRC 103217 / DC2201).